The primary structure comprises 70 residues: ATP synthase subunit c (70 aa).

The next 2 membrane-spanning stretches (helical) occupy residues isoleucine 4 to valine 24 and phenylalanine 47 to valine 67.

The protein belongs to the ATPase C chain family. In terms of assembly, F-type ATPases have 2 components, F(1) - the catalytic core - and F(0) - the membrane proton channel. F(1) has five subunits: alpha(3), beta(3), gamma(1), delta(1), epsilon(1). F(0) has three main subunits: a(1), b(2) and c(10-14). The alpha and beta chains form an alternating ring which encloses part of the gamma chain. F(1) is attached to F(0) by a central stalk formed by the gamma and epsilon chains, while a peripheral stalk is formed by the delta and b chains.

Its subcellular location is the cell membrane. Its function is as follows. F(1)F(0) ATP synthase produces ATP from ADP in the presence of a proton or sodium gradient. F-type ATPases consist of two structural domains, F(1) containing the extramembraneous catalytic core and F(0) containing the membrane proton channel, linked together by a central stalk and a peripheral stalk. During catalysis, ATP synthesis in the catalytic domain of F(1) is coupled via a rotary mechanism of the central stalk subunits to proton translocation. Key component of the F(0) channel; it plays a direct role in translocation across the membrane. A homomeric c-ring of between 10-14 subunits forms the central stalk rotor element with the F(1) delta and epsilon subunits. This is ATP synthase subunit c from Limosilactobacillus fermentum (strain NBRC 3956 / LMG 18251) (Lactobacillus fermentum).